Here is a 257-residue protein sequence, read N- to C-terminus: Probable ssDNA-binding protein (257 aa).

The segment at 222 to 257 (AFMEGRENKDDDAKSGNSNAGSQKGIDQEAASDLDD) is disordered. A compositionally biased stretch (basic and acidic residues) spans 225-235 (EGRENKDDDAK).

Functionally, required during DNA replication. Displaced viral DNA strands are transiently coated with the ssDNA-binding protein. It is then probably removed by the replisome that performs lagging strand synthesis or during the events that lead up to the recombination process. This Escherichia phage T5 (Enterobacteria phage T5) protein is Probable ssDNA-binding protein (D11).